The chain runs to 189 residues: Large ribosomal subunit protein bL9 (189 aa).

The protein belongs to the bacterial ribosomal protein bL9 family.

Its function is as follows. Binds to the 23S rRNA. The chain is Large ribosomal subunit protein bL9 from Brucella anthropi (strain ATCC 49188 / DSM 6882 / CCUG 24695 / JCM 21032 / LMG 3331 / NBRC 15819 / NCTC 12168 / Alc 37) (Ochrobactrum anthropi).